Consider the following 68-residue polypeptide: Disintegrin EMF10B (68 aa).

In terms of domain architecture, Disintegrin spans 1 to 68; sequence ELLQNSGNPC…SDCPRNPVFK (68 aa). 4 disulfide bridges follow: Cys10–Cys33, Cys24–Cys30, Cys29–Cys54, and Cys42–Cys61. A Cell attachment site; atypical (MGD) motif is present at residues 46-48; the sequence is MGD.

It belongs to the venom metalloproteinase (M12B) family. P-II subfamily. P-IIe sub-subfamily. As to quaternary structure, heterodimer with EMF10A; disulfide-linked. In terms of tissue distribution, expressed by the venom gland.

The protein resides in the secreted. Its function is as follows. Extremely potent and selective inhibitor of integrin alpha-5/beta-1 (ITGA5/ITGB1). Partially inhibits adhesion of cells expressing alpha-IIb/beta-3 (ITGA2B/ITGB3), alpha-V/beta-3 (ITGAV/ITGB3), and alpha-4/beta-1 (ITGA4/ITGB1) to appropriate ligands only at concentration higher than 500 nM. Weakly inhibits ADP-induced platelet aggregation. In Eristicophis macmahoni (Leaf-nosed viper), this protein is Disintegrin EMF10B.